The following is a 228-amino-acid chain: Urease accessory protein UreF 1 (228 aa).

Belongs to the UreF family. UreD, UreF and UreG form a complex that acts as a GTP-hydrolysis-dependent molecular chaperone, activating the urease apoprotein by helping to assemble the nickel containing metallocenter of UreC. The UreE protein probably delivers the nickel.

It localises to the cytoplasm. Required for maturation of urease via the functional incorporation of the urease nickel metallocenter. The protein is Urease accessory protein UreF 1 of Brucella canis (strain ATCC 23365 / NCTC 10854 / RM-666).